We begin with the raw amino-acid sequence, 444 residues long: Trigger factor (444 aa).

The region spanning 160-245 is the PPIase FKBP-type domain; it reads DMQVTFDFEG…VKQVEKPKLP (86 aa).

The protein belongs to the FKBP-type PPIase family. Tig subfamily.

It localises to the cytoplasm. It carries out the reaction [protein]-peptidylproline (omega=180) = [protein]-peptidylproline (omega=0). Involved in protein export. Acts as a chaperone by maintaining the newly synthesized protein in an open conformation. Functions as a peptidyl-prolyl cis-trans isomerase. This Acinetobacter baumannii (strain SDF) protein is Trigger factor.